A 1028-amino-acid polypeptide reads, in one-letter code: Unconventional myosin-Ic (1028 aa).

At M1 the chain carries N-acetylmethionine. The 685-residue stretch at 12–696 folds into the Myosin motor domain; it reads GVQDFVLLEN…TLFATEDALE (685 aa). ATP-binding positions include N53, Y61, 104–113, and 157–161; these read SGESGAGKTE and NDNSS. An N6-methyllysine modification is found at K348. The tract at residues 573–595 is actin-binding; that stretch reads LSKLMEILMSKEPSYIRCIKPND. IQ domains are found at residues 699–728 and 722–751; these read KQSL…SAIA and MKHS…AVQT. The 175-residue stretch at 850–1024 folds into the TH1 domain; it reads KDNYPQSVPR…NGHLTVVAPR (175 aa).

This sequence belongs to the TRAFAC class myosin-kinesin ATPase superfamily. Myosin family. As to quaternary structure, interacts (via its IQ motifs) with CALM.

It localises to the cytoplasm. The protein resides in the cell cortex. The protein localises to the cell projection. Its subcellular location is the ruffle membrane. It is found in the cytoplasmic vesicle. It localises to the stereocilium membrane. Myosins are actin-based motor molecules with ATPase activity. Unconventional myosins serve in intracellular movements. Their highly divergent tails are presumed to bind to membranous compartments, which would be moved relative to actin filaments. The polypeptide is Unconventional myosin-Ic (MYO1C) (Gallus gallus (Chicken)).